Reading from the N-terminus, the 457-residue chain is Argininosuccinate lyase (457 aa).

The protein belongs to the lyase 1 family. Argininosuccinate lyase subfamily.

Its subcellular location is the cytoplasm. It catalyses the reaction 2-(N(omega)-L-arginino)succinate = fumarate + L-arginine. Its pathway is amino-acid biosynthesis; L-arginine biosynthesis; L-arginine from L-ornithine and carbamoyl phosphate: step 3/3. This Escherichia coli O1:K1 / APEC protein is Argininosuccinate lyase.